Consider the following 327-residue polypeptide: MAKPAKRVAVTGAAGQIGYSLLFRIANGDMLGKDQPVILQLLDLPQAQAAVKGVVMELEDCAFPLLAGVVVTDDPKVAFKDADVALLVGARPRSKGMERKDLLSANAEIFTVQGKALNEVASRDVKVLVVGNPANTNAYIAMKSAPDLPKKNFTAMLRLDHNRALSQLAAKSGKPVSSIEKLVVWGNHSPTMYPDFRVATAEGQDLTKLINDEEWNRNTFIPTVGKRGAAIIEARGLSSAASAANAAIDHVRDWVLGTNGKWVTMGIPSDGSYGIPEDIVYGVAVTCENGEYKRVEGLQIDAFSREKMDNTLNELLEERDGVQHLLG.

12–18 (GAAGQIG) serves as a coordination point for NAD(+). Positions 93 and 99 each coordinate substrate. NAD(+) is bound by residues Asn-106, Gln-113, and 130–132 (VGN). Positions 132 and 163 each coordinate substrate. His-188 serves as the catalytic Proton acceptor.

It belongs to the LDH/MDH superfamily. MDH type 2 family.

The catalysed reaction is (S)-malate + NAD(+) = oxaloacetate + NADH + H(+). Catalyzes the reversible oxidation of malate to oxaloacetate. The sequence is that of Malate dehydrogenase from Paraburkholderia phymatum (strain DSM 17167 / CIP 108236 / LMG 21445 / STM815) (Burkholderia phymatum).